The chain runs to 258 residues: Thrombin-like enzyme ancrod-2 (258 aa).

Positions 1–18 (MVLIRVLANLVILQLSYA) are cleaved as a signal peptide. Positions 19–24 (QKSSEL) are excised as a propeptide. One can recognise a Peptidase S1 domain in the interval 25-251 (VIGGDECNIN…HLHWILSIMA (227 aa)). 6 disulfide bridges follow: Cys-31/Cys-165, Cys-52/Cys-68, Cys-102/Cys-256, Cys-144/Cys-212, Cys-176/Cys-191, and Cys-202/Cys-227. Catalysis depends on charge relay system residues His-67 and Asp-112. Asn-123 and Asn-172 each carry an N-linked (GlcNAc...) asparagine glycan. Ser-206 acts as the Charge relay system in catalysis. The N-linked (GlcNAc...) asparagine glycan is linked to Asn-253.

The protein belongs to the peptidase S1 family. Snake venom subfamily. Monomer. Expressed by the venom gland.

The protein localises to the secreted. It carries out the reaction Selective cleavage of Arg-|-Xaa bond in fibrinogen, to form fibrin, and release fibrinopeptide A. The specificity of further degradation of fibrinogen varies with species origin of the enzyme.. Thrombin-like snake venom serine protease. Cleaves fibrinogen (FGA) to split of fibrinopeptides AM, AO, and AY; the aberrant fibrinogen is then incapable of being cross-linked, forming easily dispersible clots. The polypeptide is Thrombin-like enzyme ancrod-2 (Calloselasma rhodostoma (Malayan pit viper)).